Reading from the N-terminus, the 172-residue chain is Light-harvesting complex-like protein OHP2, chloroplastic (172 aa).

Residues 1 to 43 (MSVASPIQCIRILNPSSSSSSSTASSSFRFSTTTKPCVFIIRC) constitute a chloroplast transit peptide. At 44–135 (SQTEGPLRRP…QPKNEISNGR (92 aa)) the chain is on the stromal side. The tract at residues 45-90 (QTEGPLRRPSAPPTLREPQKPVPPSQPSSSPPPSPPPQKAVAVDGK) is disordered. A compositionally biased stretch (pro residues) spans 64 to 82 (KPVPPSQPSSSPPPSPPPQ). The helical transmembrane segment at 136 to 156 (WAMFGFAVGMLTEYATGSDLV) threads the bilayer. Over 157–172 (DQVKILLSNFGILDLE) the chain is Lumenal.

Belongs to the ELIP/psbS family. Component of a high molecular weight complex containing OHP1, OHP2 and HCF244, and PSII core proteins D1/D2, HCF136 and HCF173. Forms a trimeric complex with OHP1 and HCF244 that mutually stabilizes each subunit.

It localises to the plastid. The protein resides in the chloroplast thylakoid membrane. Its function is as follows. May play a photoprotective role within PSI in response to light stress. Forms a trimeric complex with OHP1 and HCF244 that is required to promote PSII core subunit assembly. The trimeric complex forms a transient PSII reaction center-like complex with PsbA, PsbD, PsbE, PsbF and PsbI subunits in thylakoids for early assembly of PSII as well as PSII repair. The trimeric complex is required for the recruitment of ribosomes to the psbA mRNA during PSII biogenesis and repair. Forms a heterodimer with OHP1 that binds chlorophylls and carotenoids, and that may function in the delivery of pigments to the PsbA subunit of PSII. The polypeptide is Light-harvesting complex-like protein OHP2, chloroplastic (Arabidopsis thaliana (Mouse-ear cress)).